We begin with the raw amino-acid sequence, 110 residues long: Protein E7 (110 aa).

The tract at residues 1–47 (MHGPKPTVQEIVLELCPYNEIQPVDLVCHEQLGDSDDEIDEPDHAVN) is E7 terminal domain. An LXCXE motif; interaction with host RB1 and TMEM173/STING motif is present at residues 26–30 (LVCHE). A zinc finger spans residues 69–105 (CCKCNKALQLVVEASRDNLRTLQQLFMDSLNFVCPWC). Residues 87 to 95 (LRTLQQLFM) carry the Nuclear export signal motif.

It belongs to the papillomaviridae E7 protein family. In terms of assembly, homodimer. Homooligomer. Interacts with host RB1; this interaction induces dissociation of RB1-E2F1 complex thereby disrupting RB1 activity. Interacts with host EP300; this interaction represses EP300 transcriptional activity. Interacts with protein E2; this interaction inhibits E7 oncogenic activity. Interacts with host TMEM173/STING; this interaction impairs the ability of TMEM173/STING to sense cytosolic DNA and promote the production of type I interferon (IFN-alpha and IFN-beta). Post-translationally, highly phosphorylated.

The protein resides in the host cytoplasm. It localises to the host nucleus. In terms of biological role, plays a role in viral genome replication by driving entry of quiescent cells into the cell cycle. Stimulation of progression from G1 to S phase allows the virus to efficiently use the cellular DNA replicating machinery to achieve viral genome replication. E7 protein has both transforming and trans-activating activities. Induces the disassembly of the E2F1 transcription factor from RB1, with subsequent transcriptional activation of E2F1-regulated S-phase genes. Interferes with host histone deacetylation mediated by HDAC1 and HDAC2, leading to transcription activation. Also plays a role in the inhibition of both antiviral and antiproliferative functions of host interferon alpha. Interaction with host TMEM173/STING impairs the ability of TMEM173/STING to sense cytosolic DNA and promote the production of type I interferon (IFN-alpha and IFN-beta). The protein is Protein E7 of Human papillomavirus 68.